The following is a 167-amino-acid chain: MTKKIAVFPGSFDPFTNGHLDTVKRASRLFDEVVVAAMTNTSKKPLFSSEEKLALISESTAGLPNVKAMAAPKRLTVEFARSIGAQFMIRGIRNVADFGYEADIATVNHDLDPEIETVFLLADKQYDALSSTIIKEVAAFGGDVHRFVPAPVEAALYAKLGDAHQTK.

Serine 11 serves as a coordination point for substrate. ATP is bound by residues 11 to 12 (SF) and histidine 19. Substrate contacts are provided by lysine 43, threonine 76, and arginine 90. ATP-binding positions include 91–93 (GIR), glutamate 101, and 126–132 (YDALSST).

The protein belongs to the bacterial CoaD family. Homohexamer. Mg(2+) serves as cofactor.

Its subcellular location is the cytoplasm. The enzyme catalyses (R)-4'-phosphopantetheine + ATP + H(+) = 3'-dephospho-CoA + diphosphate. The protein operates within cofactor biosynthesis; coenzyme A biosynthesis; CoA from (R)-pantothenate: step 4/5. In terms of biological role, reversibly transfers an adenylyl group from ATP to 4'-phosphopantetheine, yielding dephospho-CoA (dPCoA) and pyrophosphate. The chain is Phosphopantetheine adenylyltransferase from Lacticaseibacillus paracasei (strain ATCC 334 / BCRC 17002 / CCUG 31169 / CIP 107868 / KCTC 3260 / NRRL B-441) (Lactobacillus paracasei).